A 773-amino-acid polypeptide reads, in one-letter code: Circadian clock protein PASD1 (773 aa).

The PAS domain occupies 30–102 (YDYFNQVTLQ…IILKFPLLNS (73 aa)). Positions 313–361 (SVDQEGPMDQQDPENPVAPLDQAGLMDPVDPEDSVDLGAAGASAQPLQP) are disordered. The tract at residues 365-412 (VAYDIISQELELMKKLKEQLEERTWLLHDAIQNQQNALELMMDHLQKQ) is necessary for transcriptional repression. Residues 365–412 (VAYDIISQELELMKKLKEQLEERTWLLHDAIQNQQNALELMMDHLQKQ) are a coiled coil. Disordered regions lie at residues 427–448 (SEAVPKKQQKQHAGQVKRPLPH), 506–569 (QRKV…QLQE), and 732–773 (GVEG…NKPC). Residues 475 to 553 (VAFNQQQLVQ…QERKKWQGQM (79 aa)) are a coiled coil. Basic and acidic residues predominate over residues 506 to 536 (QRKVQKQKKMQEKKKLQEQKMQEKKKLQEQR).

As to quaternary structure, interacts with the CLOCK-BMAL1 heterodimer; this interaction inhibits CLOCK-BMAL1 transcriptional activation and suppress circadian timekeeping. Interacts with BMAL1. As to expression, testis-specific. Expressed in a broad range of cancer cells, including melanoma, lung cancer, and breast cancer (at protein level). Testis-specific. Found in histologically normal tissues from patients with uterus, lung and small intestine cancers. Widespread expression seen in solid tumors and diffuse large B-cell lymphoma (DLBCL)-derived cell lines. Isoform 2 is expressed in all DLBCL-derived cell lines, while isoform 1 is preferentially expressed in cell lines derived from non-germinal center DLBCL.

Its subcellular location is the nucleus. In terms of biological role, functions as a suppressor of the biological clock that drives the daily circadian rhythms of cells throughout the body. Acts as a nuclear repressor of the CLOCK-BMAL1 heterodimer-mediated transcriptional activation of the core clock components. Inhibits circadian clock function in cancer cells, when overexpressed. This Homo sapiens (Human) protein is Circadian clock protein PASD1.